Consider the following 313-residue polypeptide: tRNA dimethylallyltransferase (313 aa).

9 to 16 (GPTATGKS) contributes to the ATP binding site. 11–16 (TATGKS) provides a ligand contact to substrate.

The protein belongs to the IPP transferase family. Monomer. It depends on Mg(2+) as a cofactor.

The catalysed reaction is adenosine(37) in tRNA + dimethylallyl diphosphate = N(6)-dimethylallyladenosine(37) in tRNA + diphosphate. Catalyzes the transfer of a dimethylallyl group onto the adenine at position 37 in tRNAs that read codons beginning with uridine, leading to the formation of N6-(dimethylallyl)adenosine (i(6)A). This Mycobacteroides abscessus (strain ATCC 19977 / DSM 44196 / CCUG 20993 / CIP 104536 / JCM 13569 / NCTC 13031 / TMC 1543 / L948) (Mycobacterium abscessus) protein is tRNA dimethylallyltransferase.